A 294-amino-acid polypeptide reads, in one-letter code: Autophagy protein 5 (294 aa).

A Glycyl lysine isopeptide (Lys-Gly) (interchain with G-Cter in ATG12) cross-link involves residue Lys149.

Belongs to the ATG5 family. In terms of assembly, conjugated with ATG12. The ATG5-ATG12 conjugate forms a complex with several units of ATG16. The ATG12-ATG5 conjugate also associates with ATG3. Post-translationally, conjugated to ATG12; which is essential for autophagy. Conjugation with ATG12 involves ATG7 as an E1-like activating enzyme and ATG10 as an E2-like conjugating enzyme.

The protein resides in the preautophagosomal structure membrane. Functionally, involved in cytoplasm to vacuole transport (Cvt) and autophagic vesicle formation. Autophagy is essential for maintenance of amino acid levels and protein synthesis under nitrogen starvation. Required for selective autophagic degradation of the nucleus (nucleophagy). Also required for mitophagy, which eliminates defective or superfluous mitochondria in order to fulfill cellular energy requirements and prevent excess ROS production. Conjugation with ATG12, through a ubiquitin-like conjugating system involving ATG7 as an E1-like activating enzyme and ATG10 as an E2-like conjugating enzyme, is essential for its function. The ATG12-ATG5 conjugate acts as an E3-like enzyme which is required for lipidation of ATG8 and ATG8 association to the vesicle membranes. ATG12-ATG5 rearranges the ATG3 catalytic center and enhances its E2 activity. Plays a role in the regulation of filamentous growth and chronological longevity. The polypeptide is Autophagy protein 5 (ATG5) (Saccharomyces cerevisiae (strain YJM789) (Baker's yeast)).